Reading from the N-terminus, the 259-residue chain is 1,2-dihydroxy-1,2-dihydronaphthalene dehydrogenase (259 aa).

8 to 32 is a binding site for NAD(+); sequence SITGAGSGIGLELVRSFKSAGYYVS. Serine 140 contacts substrate. Catalysis depends on tyrosine 153, which acts as the Proton acceptor.

The protein belongs to the short-chain dehydrogenases/reductases (SDR) family.

The catalysed reaction is (1R,2S)-1,2-dihydronaphthalene-1,2-diol + NAD(+) = naphthalene-1,2-diol + NADH + H(+). It carries out the reaction cis-1,2-dihydroxy-1,2-dihydrodibenzothiophene + NAD(+) = 1,2-dihydroxydibenzothiophene + NADH + H(+). The protein operates within aromatic compound metabolism; naphthalene degradation. In terms of biological role, catalyzes the oxidation of naphthalene dihydrodiol into 1,2-dihydroxynaphthalene. The protein is 1,2-dihydroxy-1,2-dihydronaphthalene dehydrogenase (nahB) of Pseudomonas putida (Arthrobacter siderocapsulatus).